The following is a 505-amino-acid chain: Glutamate--tRNA ligase (505 aa).

The 'HIGH' region signature appears at 12–22 (PSPTGDPHVGT). Residues 253 to 257 (KLSKR) carry the 'KMSKS' region motif. Lys-256 is a binding site for ATP.

Belongs to the class-I aminoacyl-tRNA synthetase family. Glutamate--tRNA ligase type 1 subfamily. In terms of assembly, monomer.

The protein localises to the cytoplasm. It catalyses the reaction tRNA(Glu) + L-glutamate + ATP = L-glutamyl-tRNA(Glu) + AMP + diphosphate. Its function is as follows. Catalyzes the attachment of glutamate to tRNA(Glu) in a two-step reaction: glutamate is first activated by ATP to form Glu-AMP and then transferred to the acceptor end of tRNA(Glu). This is Glutamate--tRNA ligase from Chlamydia abortus (strain DSM 27085 / S26/3) (Chlamydophila abortus).